The following is an 8892-amino-acid chain: Nonribosomal peptide synthetase 32 (8892 aa).

Positions 12–85 constitute a Carrier 1 domain; it reads EPSKLVLGRV…QLAESIAQQN (74 aa). Ser46 is modified (O-(pantetheine 4'-phosphoryl)serine). Residues 88–112 form a disordered region; that stretch reads AGNGVNGHANGNGMNGNGLHNEATI. The span at 93–108 shows a compositional bias: low complexity; it reads NGHANGNGMNGNGLHN. The segment at 567-956 is condensation 1; that stretch reads PTSANVPRRV…EGVDLSVRDF (390 aa). Residues 989–1386 form an adenylation 1 region; the sequence is KMAEQPEALA…GRIDSQIKIR (398 aa). The Carrier 2 domain occupies 1523–1599; it reads ISATAVEREL…ELAAEVQATQ (77 aa). O-(pantetheine 4'-phosphoryl)serine is present on Ser1560. Residues 1609–2039 form an epimerization 1 region; it reads GAIALSPIQQ…YGQTVKSLVN (431 aa). The condensation 2 stretch occupies residues 2083–2518; sequence EDILPCSPIQ…LLLPAEEAKL (436 aa). Residues 2543–2934 form an adenylation 2 region; it reads SQPEALAVSA…GRRDTQVKIR (392 aa). A Carrier 3 domain is found at 3061–3137; that stretch reads SSATPIEREL…ELAANSQTGR (77 aa). The residue at position 3098 (Ser3098) is an O-(pantetheine 4'-phosphoryl)serine. Residues 3153–3590 are epimerization 2; the sequence is LSPIQQMFFD…GDTVKTLVEE (438 aa). Positions 3634–4061 are condensation 3; it reads EDILPCSAIQ…NVDRPLRELT (428 aa). The segment at 4098–4488 is adenylation 3; the sequence is TLPEALAISS…GRIDSQIKIR (391 aa). The 77-residue stretch at 4627–4703 folds into the Carrier 4 domain; sequence APTTDLERKL…DLSRVVEEKC (77 aa). An O-(pantetheine 4'-phosphoryl)serine modification is found at Ser4664. Residues 4760-5181 form a condensation 4 region; it reads EDVYPCSPMQ…LLTDEDCDQL (422 aa). The interval 5205 to 5605 is adenylation 4; sequence TSYPTAPAIS…GRRDTQVKIR (401 aa). The Carrier 5 domain occupies 5745–5821; the sequence is MPTTPMEQKL…DLAEAMEEKG (77 aa). Ser5782 is subject to O-(pantetheine 4'-phosphoryl)serine. A condensation 5 region spans residues 5868–6285; sequence EDVYPCSPLQ…LLSPGQMAQI (418 aa). Residues 6307 to 6700 form an adenylation 5 region; that stretch reads QMTTRPAATA…GRIDTQIKIR (394 aa). One can recognise a Carrier 6 domain in the interval 6834–6911; it reads ELTTTIERQL…ELATQTQTTE (78 aa). Residue Ser6872 is modified to O-(pantetheine 4'-phosphoryl)serine. An epimerization 3 region spans residues 6923–7360; the sequence is NFQLSPIQQM…SYSCAIESLV (438 aa). Residues 7403–7834 form a condensation 6 region; sequence VQDILPCSPI…LLPAGDANQI (432 aa). An adenylation 6 region spans residues 7855 to 8253; sequence QQMAAHPTAQ…LDRIGTQVKI (399 aa). Residues 8380-8456 form the Carrier 7 domain; that stretch reads APVGRNEEIL…AMAARVTADI (77 aa). An O-(pantetheine 4'-phosphoryl)serine modification is found at Ser8417. Residues 8490–8878 form a condensation 7 region; that stretch reads HFAFDATGPC…EIIEDSGCNV (389 aa).

This sequence belongs to the NRP synthetase family.

The protein operates within secondary metabolite biosynthesis. Nonribosomal peptide synthetase; part of the gene cluster that mediates the biosynthesis of the lipopeptides W493 A and B. W493 A and B consist of six amino acid residues D-allo-thr, L-Ala, D-Ala, L-Gln, D-Tyr, and L-Val/L-Ile linked to a 3-hydroxy-4-methyltetradecanoic acid polyketide chain. The biosynthesis starts with formation of the linear polyketide chain by the highly reducing polyketide synthase PKS40. The gene cluster contains a putative acyl-CoA ligase (FPSE_09184) for formation of a CoA thioester polyketide. The thiol bond could be hydrolyzed by the putative thioesterase (FPSE_09186) and then accepted by the first T domain in module 1 of NRPS32. The second T domain is responsible for accepting a threonine, which is adenylated by the A domain and epimerized to the D-allo-threonine formed by the E domain. The five successive modules incorporate Ala, Ala, Gln, Tyr, and Val/Ile into the final product, which is released by cyclization. The chain is Nonribosomal peptide synthetase 32 from Fusarium pseudograminearum (strain CS3096) (Wheat and barley crown-rot fungus).